The following is a 447-amino-acid chain: GTPase Der (447 aa).

2 EngA-type G domains span residues Pro3–Glu167 and Ile180–Asn353. Residues Gly9–Ser16, Asp56–Phe60, Asn119–Glu122, Gly186–Ser193, Asp233–Leu237, and Asn298–Asp301 each bind GTP. A KH-like domain is found at Arg354 to Ser438.

It belongs to the TRAFAC class TrmE-Era-EngA-EngB-Septin-like GTPase superfamily. EngA (Der) GTPase family. In terms of assembly, associates with the 50S ribosomal subunit.

Functionally, GTPase that plays an essential role in the late steps of ribosome biogenesis. This is GTPase Der from Acidovorax sp. (strain JS42).